The following is a 583-amino-acid chain: Secretogranin-2b (583 aa).

The N-terminal stretch at 1–28 (MMLSLPKLSAGGVVVLLATLLHTLTVQG) is a signal peptide. 2 disordered regions span residues 123 to 159 (AGESPESQAAGNERRLHKTRRPVADGESPAGDYAGFV) and 526 to 583 (VDNG…VAGM). The segment covering 534–546 (AKRDTQGKEEPEG) has biased composition (basic and acidic residues).

This sequence belongs to the chromogranin/secretogranin protein family.

The protein localises to the secreted. Its function is as follows. Neuroendocrine protein of the granin family that regulates the biogenesis of secretory granules. Required for neurovascular modeling of the hindbrain. Acts in a non-cell autonomous manner and is required for migration and proliferation of central artery endothelial cells. Required for normal courting behavior and spawning. This Danio rerio (Zebrafish) protein is Secretogranin-2b.